The following is a 116-amino-acid chain: Ribonuclease P protein component 2 (116 aa).

The protein belongs to the eukaryotic/archaeal RNase P protein component 2 family. In terms of assembly, consists of a catalytic RNA component and at least 4-5 protein subunits.

The protein localises to the cytoplasm. It carries out the reaction Endonucleolytic cleavage of RNA, removing 5'-extranucleotides from tRNA precursor.. Part of ribonuclease P, a protein complex that generates mature tRNA molecules by cleaving their 5'-ends. In Methanosarcina mazei (strain ATCC BAA-159 / DSM 3647 / Goe1 / Go1 / JCM 11833 / OCM 88) (Methanosarcina frisia), this protein is Ribonuclease P protein component 2.